Reading from the N-terminus, the 953-residue chain is 26S proteasome non-ATPase regulatory subunit 1 (953 aa).

Methionine 1 is modified (N-acetylmethionine; partial). Threonine 273 is subject to Phosphothreonine. The segment at 279–318 (PGSTNTGTVPGSEKDSDSMETEEKTGSAFVGKTPEASPEP) is disordered. A Phosphoserine modification is found at serine 290. Over residues 290 to 303 (SEKDSDSMETEEKT) the composition is skewed to basic and acidic residues. At lysine 310 the chain carries N6-acetyllysine. A Phosphothreonine modification is found at threonine 311. Phosphoserine is present on serine 315. PC repeat units lie at residues 403–436 (TATA…PGSA), 441–474 (GGLY…DIVR), 476–510 (GGSL…VTGE), 511–545 (AAGL…EKIL), 547–580 (GLAV…ILRR), 581–616 (SGMY…DVRR), 617–649 (AAVE…PHVR), 651–685 (GAAM…YVRQ), 686–726 (GALI…DVMA), and 729–761 (GAIL…PSVV). N6-acetyllysine is present on lysine 720. Position 830 is a phosphothreonine (threonine 830). Serine 834 carries the phosphoserine modification. Disordered stretches follow at residues 839 to 881 (AKKK…LDNP) and 930 to 953 (AHGP…YIDD). 2 stretches are compositionally biased toward basic and acidic residues: residues 842-852 (KEKEKEKKEEE) and 859-872 (AEKK…KEPE). The segment covering 936–953 (EEEEQEPEPPEPFEYIDD) has biased composition (acidic residues).

Belongs to the proteasome subunit S1 family. As to quaternary structure, component of the 19S proteasome regulatory particle complex. The 26S proteasome consists of a 20S core particle (CP) and two 19S regulatory subunits (RP). The regulatory particle is made of a lid composed of 9 subunits, a base containing 6 ATPases and few additional components including PSMD1. Interacts with ADRM1. Interacts with ZFAND1.

Functionally, component of the 26S proteasome, a multiprotein complex involved in the ATP-dependent degradation of ubiquitinated proteins. This complex plays a key role in the maintenance of protein homeostasis by removing misfolded or damaged proteins, which could impair cellular functions, and by removing proteins whose functions are no longer required. Therefore, the proteasome participates in numerous cellular processes, including cell cycle progression, apoptosis, or DNA damage repair. This chain is 26S proteasome non-ATPase regulatory subunit 1 (PSMD1), found in Pongo abelii (Sumatran orangutan).